Consider the following 250-residue polypeptide: Uracil-DNA glycosylase (250 aa).

D78 functions as the Proton acceptor in the catalytic mechanism. The interval R228–L250 is disordered.

The protein belongs to the uracil-DNA glycosylase (UDG) superfamily. UNG family.

The protein localises to the cytoplasm. It catalyses the reaction Hydrolyzes single-stranded DNA or mismatched double-stranded DNA and polynucleotides, releasing free uracil.. Functionally, excises uracil residues from the DNA which can arise as a result of misincorporation of dUMP residues by DNA polymerase or due to deamination of cytosine. This chain is Uracil-DNA glycosylase, found in Bordetella pertussis (strain Tohama I / ATCC BAA-589 / NCTC 13251).